The following is a 678-amino-acid chain: Glycine--tRNA ligase beta subunit (678 aa).

This sequence belongs to the class-II aminoacyl-tRNA synthetase family. As to quaternary structure, tetramer of two alpha and two beta subunits.

It is found in the cytoplasm. The enzyme catalyses tRNA(Gly) + glycine + ATP = glycyl-tRNA(Gly) + AMP + diphosphate. The chain is Glycine--tRNA ligase beta subunit from Sulfurihydrogenibium sp. (strain YO3AOP1).